A 217-amino-acid polypeptide reads, in one-letter code: MKIFIDTANVEEIRKASELGVLSGVTTNPSLIAKEGRDLKEVVEEICSIVDGPISAEVISLEHEKMIEEGRELSKLHKNIVIKIPMCEEGLKAVSVLSKEGIKTNVTLIFSSMQALLAARAGATYVSPFLGRLDDIGNPGIEVVEQIADMFKIHEIKTEIIAASVRTPMHVLEAAMAGSHIATIPYKVIIQMSKHALTDIGIEKFMKDYEKAFGENK.

The Schiff-base intermediate with substrate role is filled by lysine 83.

It belongs to the transaldolase family. Type 3B subfamily.

It is found in the cytoplasm. The enzyme catalyses D-sedoheptulose 7-phosphate + D-glyceraldehyde 3-phosphate = D-erythrose 4-phosphate + beta-D-fructose 6-phosphate. The protein operates within carbohydrate degradation; pentose phosphate pathway; D-glyceraldehyde 3-phosphate and beta-D-fructose 6-phosphate from D-ribose 5-phosphate and D-xylulose 5-phosphate (non-oxidative stage): step 2/3. Functionally, transaldolase is important for the balance of metabolites in the pentose-phosphate pathway. This is Probable transaldolase from Clostridium botulinum (strain Loch Maree / Type A3).